The chain runs to 445 residues: 3-phosphoshikimate 1-carboxyvinyltransferase (445 aa).

Positions 21, 22, and 26 each coordinate 3-phosphoshikimate. Position 21 (Lys-21) interacts with phosphoenolpyruvate. Gly-92 and Arg-120 together coordinate phosphoenolpyruvate. 3-phosphoshikimate is bound by residues Ser-165, Gln-166, Asp-307, and Lys-334. Gln-166 serves as a coordination point for phosphoenolpyruvate. Asp-307 functions as the Proton acceptor in the catalytic mechanism. Residues Arg-338, Arg-379, and Lys-405 each coordinate phosphoenolpyruvate.

The protein belongs to the EPSP synthase family. Monomer.

The protein resides in the cytoplasm. The enzyme catalyses 3-phosphoshikimate + phosphoenolpyruvate = 5-O-(1-carboxyvinyl)-3-phosphoshikimate + phosphate. It participates in metabolic intermediate biosynthesis; chorismate biosynthesis; chorismate from D-erythrose 4-phosphate and phosphoenolpyruvate: step 6/7. Functionally, catalyzes the transfer of the enolpyruvyl moiety of phosphoenolpyruvate (PEP) to the 5-hydroxyl of shikimate-3-phosphate (S3P) to produce enolpyruvyl shikimate-3-phosphate and inorganic phosphate. This Chlamydia felis (strain Fe/C-56) (Chlamydophila felis) protein is 3-phosphoshikimate 1-carboxyvinyltransferase.